The chain runs to 499 residues: Thioredoxin reductase 1, cytoplasmic (499 aa).

Residues 22–23 (SG), 42–43 (DF), 58–59 (TC), and 63–67 (SCIPK) contribute to the FAD site. Cysteine 59 and cysteine 64 are oxidised to a cystine. Lysine 68 bears the N6-succinyllysine mark. Tyrosine 131 is modified (phosphotyrosine). Residues 131–132 (YG) and threonine 161 contribute to the FAD site. Residues arginine 166, 198–204 (ASYVALE), 221–222 (RS), arginine 226, 226–228 (RGF), 292–293 (GR), and lysine 315 each bind NADP(+). An FAD-binding site is contributed by tyrosine 200. Residues aspartate 334, 341 to 343 (ELT), and histidine 472 each bind FAD. Residue glutamate 341 coordinates NADP(+). The Proton acceptor role is filled by histidine 472. The cysteinyl-selenocysteine (Cys-Sec) cross-link spans 497 to 498 (CU). Selenocysteine 498 is a non-standard amino acid (selenocysteine).

This sequence belongs to the class-I pyridine nucleotide-disulfide oxidoreductase family. Homodimer. It depends on FAD as a cofactor. Post-translationally, ISGylated.

It is found in the cytoplasm. The catalysed reaction is [thioredoxin]-dithiol + NADP(+) = [thioredoxin]-disulfide + NADPH + H(+). It carries out the reaction H2O2 + NADPH + H(+) = NADP(+) + 2 H2O. Functionally, reduces disulfideprotein thioredoxin (Trx) to its dithiol-containing form. Homodimeric flavoprotein involved in the regulation of cellular redox reactions, growth and differentiation. Contains a selenocysteine residue at the C-terminal active site that is essential for catalysis. Also has reductase activity on hydrogen peroxide (H2O2). This is Thioredoxin reductase 1, cytoplasmic (TXNRD1) from Sus scrofa (Pig).